We begin with the raw amino-acid sequence, 574 residues long: Frizzled-7 (574 aa).

The signal sequence occupies residues 1 to 32; it reads MRDPGAAAPLSSLGLCALVLALLGALSAGAGA. The Extracellular segment spans residues 33–256; the sequence is QPYHGEKGIS…EEERRFARLW (224 aa). The FZ domain occupies 44-163; the sequence is PDHGFCQPIS…HGAGEICVGQ (120 aa). Cystine bridges form between Cys49–Cys110, Cys57–Cys103, Cys94–Cys131, Cys120–Cys160, and Cys124–Cys148. Residue Asn63 is glycosylated (N-linked (GlcNAc...) asparagine). The N-linked (GlcNAc...) asparagine glycan is linked to Asn164. A helical membrane pass occupies residues 257–277; the sequence is VGVWSVLCCASTLFTVLTYLV. Topologically, residues 278-288 are cytoplasmic; that stretch reads DMRRFSYPERP. Residues 289 to 309 form a helical membrane-spanning segment; that stretch reads IIFLSGCYFMVAVAHVAGFLL. Residues 310 to 336 lie on the Extracellular side of the membrane; sequence EDRAVCVERFSDDGYRTVAQGTKKEGC. Residues 337–357 traverse the membrane as a helical segment; that stretch reads TILFMVLYFFGMASSIWWVIL. Over 358–379 the chain is Cytoplasmic; sequence SLTWFLAAGMKWGHEAIEANSQ. Residues 380–400 traverse the membrane as a helical segment; that stretch reads YFHLAAWAVPAVKTITILAMG. Residues 401-423 are Extracellular-facing; it reads QVDGDLLSGVCYVGLSSVDALRG. Residues 424-444 form a helical membrane-spanning segment; sequence FVLAPLFVYLFIGTSFLLAGF. Residues 445-470 lie on the Cytoplasmic side of the membrane; sequence VSLFRIRTIMKHDGTKTEKLEKLMVR. The chain crosses the membrane as a helical span at residues 471-491; the sequence is IGVFSVLYTVPATIVLACYFY. The Extracellular segment spans residues 492 to 528; that stretch reads EQAFREHWERTWLLQTCKSYAVPCPPGHFPPMSPDFT. A helical transmembrane segment spans residues 529–549; the sequence is VFMIKYLMTMIVGITTGFWIW. Over 550 to 574 the chain is Cytoplasmic; the sequence is SGKTLQSWRRFYHRLSHSSKGETAV. Positions 552 to 557 match the Lys-Thr-X-X-X-Trp motif, mediates interaction with the PDZ domain of Dvl family members motif; it reads KTLQSW. Positions 572-574 match the PDZ-binding motif; it reads TAV.

It belongs to the G-protein coupled receptor Fz/Smo family. Interacts with MAGI3. Interacts with DVL1. Interacts with CCDC88C/DAPLE; the interaction displaces DVL1 from FZD7, leading to inhibition of canonical Wnt signaling and triggering of non-canonical Wnt responses. Interacts with MYOC. Binds to SDCBP; this interaction is increased by inositol trisphosphate (IP3). Interacts with glypican GPC3. In terms of assembly, (Microbial infection) Interacts with C.difficile toxin TcdB; frizzled receptors constitute the major host receptors for TcdB in the colonic epithelium. Post-translationally, ubiquitinated by ZNRF3, leading to its degradation by the proteasome. In terms of tissue distribution, high expression in adult skeletal muscle and fetal kidney, followed by fetal lung, adult heart, brain, and placenta. Specifically expressed in squamous cell esophageal carcinomas.

It is found in the cell membrane. The protein localises to the endosome membrane. Functionally, receptor for Wnt proteins. Most frizzled receptors are coupled to the beta-catenin canonical signaling pathway, which leads to the activation of disheveled proteins, inhibition of GSK-3 kinase, nuclear accumulation of beta-catenin and activation of Wnt target genes. A second signaling pathway involving PKC and calcium fluxes has been seen for some family members, but it is not yet clear if it represents a distinct pathway or if it can be integrated in the canonical pathway, as PKC seems to be required for Wnt-mediated inactivation of GSK-3 kinase. Both pathways seem to involve interactions with G-proteins. Activation by WNT8 induces expression of beta-catenin target genes. Following ligand activation, binds to CCDC88C/DAPLE which displaces DVL1 from FZD7 and leads to inhibition of canonical Wnt signaling, activation of G-proteins by CCDC88C and triggering of non-canonical Wnt responses. May be involved in transduction and intercellular transmission of polarity information during tissue morphogenesis and/or in differentiated tissues. (Microbial infection) Acts as a receptor for C.difficile toxin TcdB in the colonic epithelium. The protein is Frizzled-7 (FZD7) of Homo sapiens (Human).